The sequence spans 278 residues: Diaminopimelate epimerase (278 aa).

Substrate is bound by residues N13 and N66. Catalysis depends on C75, which acts as the Proton donor. Substrate is bound by residues 76-77 (GN), N162, N195, and 213-214 (ER). Catalysis depends on C222, which acts as the Proton acceptor. 223 to 224 (GT) provides a ligand contact to substrate.

It belongs to the diaminopimelate epimerase family. In terms of assembly, homodimer.

Its subcellular location is the cytoplasm. It carries out the reaction (2S,6S)-2,6-diaminopimelate = meso-2,6-diaminopimelate. It participates in amino-acid biosynthesis; L-lysine biosynthesis via DAP pathway; DL-2,6-diaminopimelate from LL-2,6-diaminopimelate: step 1/1. Functionally, catalyzes the stereoinversion of LL-2,6-diaminopimelate (L,L-DAP) to meso-diaminopimelate (meso-DAP), a precursor of L-lysine and an essential component of the bacterial peptidoglycan. In Trichodesmium erythraeum (strain IMS101), this protein is Diaminopimelate epimerase.